An 805-amino-acid polypeptide reads, in one-letter code: Acetyl-CoA decarbonylase/synthase complex subunit alpha 2 (805 aa).

Positions 72, 75, 76, 78, 83, and 93 each coordinate [4Fe-4S] cluster. His116 provides a ligand contact to CO. The [Ni-4Fe-4S] cluster site is built by His249, Cys277, and Cys322. 2 4Fe-4S ferredoxin-type domains span residues 407 to 435 (EEFKVYIDKCVKCGECMLACPEELDIPEA) and 445 to 474 (EYLEALHDVCIGCRRCEQVCKKEIPILNVL). [4Fe-4S] cluster contacts are provided by Cys416, Cys419, Cys422, Cys426, Cys454, Cys457, Cys460, and Cys464. Residues Cys522, Cys551, and Cys586 each contribute to the [Ni-4Fe-4S] cluster site.

Belongs to the Ni-containing carbon monoxide dehydrogenase family. In terms of assembly, heterotetramer of two alpha and two epsilon subunits. The ACDS complex is made up of alpha, epsilon, beta, gamma and delta subunits with a probable stoichiometry of (alpha(2)epsilon(2))(4)-beta(8)-(gamma(1)delta(1))(8). It depends on [4Fe-4S] cluster as a cofactor. [Ni-4Fe-4S] cluster is required as a cofactor.

The enzyme catalyses CO + 2 oxidized [2Fe-2S]-[ferredoxin] + H2O = 2 reduced [2Fe-2S]-[ferredoxin] + CO2 + 2 H(+). It participates in one-carbon metabolism; methanogenesis from acetate. Part of the ACDS complex that catalyzes the reversible cleavage of acetyl-CoA, allowing growth on acetate as sole source of carbon and energy. The alpha-epsilon subcomponent functions as a carbon monoxide dehydrogenase. The sequence is that of Acetyl-CoA decarbonylase/synthase complex subunit alpha 2 from Methanosarcina acetivorans (strain ATCC 35395 / DSM 2834 / JCM 12185 / C2A).